The following is a 148-amino-acid chain: Probable histone H2B.1 (148 aa).

The span at 1–32 shows a compositional bias: basic and acidic residues; the sequence is MAPKGEKKPAEKKPAEEKKSTVAEKAPAEKKP. A disordered region spans residues 1-57; it reads MAPKGEKKPAEKKPAEEKKSTVAEKAPAEKKPKAGKKLPKEGGSAAGEKKKKRSKKS. N6-acetyllysine occurs at positions 7, 36, and 37. Residue lysine 144 forms a Glycyl lysine isopeptide (Lys-Gly) (interchain with G-Cter in ubiquitin) linkage.

It belongs to the histone H2B family. As to quaternary structure, the nucleosome is a histone octamer containing two molecules each of H2A, H2B, H3 and H4 assembled in one H3-H4 heterotetramer and two H2A-H2B heterodimers. The octamer wraps approximately 147 bp of DNA. Can be acetylated to form H2BK6ac, H2BK33ac and H2BK34ac. In terms of processing, monoubiquitinated to form H2BK143ub1; may give a specific tag for epigenetic transcriptional activation.

It is found in the nucleus. It localises to the chromosome. Its function is as follows. Core component of nucleosome. Nucleosomes wrap and compact DNA into chromatin, limiting DNA accessibility to the cellular machineries which require DNA as a template. Histones thereby play a central role in transcription regulation, DNA repair, DNA replication and chromosomal stability. DNA accessibility is regulated via a complex set of post-translational modifications of histones, also called histone code, and nucleosome remodeling. The sequence is that of Probable histone H2B.1 from Medicago truncatula (Barrel medic).